The chain runs to 460 residues: Keratin, type I cytoskeletal 27 (460 aa).

Residues 1 to 83 (MSVRFSSASR…GNEHGLLSGN (83 aa)) form a head region. Positions 84 to 119 (EKVTMQNLNDRLASYLDNVRALEEANADLEQKIKGW) are coil 1A. The region spanning 84-399 (EKVTMQNLND…RLIDGEDGSC (316 aa)) is the IF rod domain. The tract at residues 120-141 (YEKFGPGSCRGLDHDYSRYFTV) is linker 1. Residues 142–233 (IDDLRNQIIS…KNHEEEMKAL (92 aa)) are coil 1B. Residues 234–256 (QCAAGGNVNVEMNAAPGVDLTVL) form a linker 12 region. Residues 257–395 (LNNMRAEYEA…ETYCRLIDGE (139 aa)) are coil 2. Residues 396 to 460 (DGSCTKSKGY…NMKSEQRVPS (65 aa)) form a tail region. A disordered region spans residues 429–460 (DPRGKVPSSRVHTVEEKSTKVNNMKSEQRVPS). A compositionally biased stretch (polar residues) spans 448-460 (KVNNMKSEQRVPS).

This sequence belongs to the intermediate filament family. Heterotetramer of two type I and two type II keratins. Interacts with KRT6A to form filaments.

Its subcellular location is the cytoplasm. Essential for the proper assembly of type I and type II keratin protein complexes and formation of keratin intermediate filaments in the inner root sheath (irs). The chain is Keratin, type I cytoskeletal 27 from Capra hircus (Goat).